A 121-amino-acid chain; its full sequence is Small ribosomal subunit protein uS13 (121 aa).

Residues Gly94–Lys121 are disordered.

Belongs to the universal ribosomal protein uS13 family. In terms of assembly, part of the 30S ribosomal subunit. Forms a loose heterodimer with protein S19. Forms two bridges to the 50S subunit in the 70S ribosome.

Functionally, located at the top of the head of the 30S subunit, it contacts several helices of the 16S rRNA. In the 70S ribosome it contacts the 23S rRNA (bridge B1a) and protein L5 of the 50S subunit (bridge B1b), connecting the 2 subunits; these bridges are implicated in subunit movement. Contacts the tRNAs in the A and P-sites. The chain is Small ribosomal subunit protein uS13 from Delftia acidovorans (strain DSM 14801 / SPH-1).